The primary structure comprises 246 residues: UDP-N-acetyl-D-mannosaminuronic acid transferase (246 aa).

This sequence belongs to the glycosyltransferase 26 family.

It catalyses the reaction UDP-N-acetyl-alpha-D-mannosaminouronate + N-acetyl-alpha-D-glucosaminyl-di-trans,octa-cis-undecaprenyl diphosphate = beta-D-ManNAcA-(1-&gt;4)-alpha-D-GlcNAc-di-trans,octa-cis-undecaprenyl diphosphate + UDP + H(+). Its pathway is bacterial outer membrane biogenesis; enterobacterial common antigen biosynthesis. Functionally, catalyzes the synthesis of Und-PP-GlcNAc-ManNAcA (Lipid II), the second lipid-linked intermediate involved in enterobacterial common antigen (ECA) synthesis. The sequence is that of UDP-N-acetyl-D-mannosaminuronic acid transferase from Yersinia pestis bv. Antiqua (strain Antiqua).